The sequence spans 162 residues: 3-dehydroquinate dehydratase (162 aa).

Residue Tyr22 is the Proton acceptor of the active site. Asn73, His79, and Asp86 together coordinate substrate. Catalysis depends on His99, which acts as the Proton donor. Substrate-binding positions include 100-101 (LS) and Arg110.

Belongs to the type-II 3-dehydroquinase family. In terms of assembly, homododecamer.

The catalysed reaction is 3-dehydroquinate = 3-dehydroshikimate + H2O. It participates in metabolic intermediate biosynthesis; chorismate biosynthesis; chorismate from D-erythrose 4-phosphate and phosphoenolpyruvate: step 3/7. In terms of biological role, catalyzes a trans-dehydration via an enolate intermediate. This is 3-dehydroquinate dehydratase from Sulfurovum sp. (strain NBC37-1).